A 665-amino-acid polypeptide reads, in one-letter code: Protein-arginine deiminase type-2 (665 aa).

Positions 123, 125, 127, 129, 131, 154, 156, 158, 166, 169, 171, 177, 180, 354, 389, 408, 411, and 412 each coordinate Ca(2+). Catalysis depends on Cys-647, which acts as the Nucleophile.

Belongs to the protein arginine deiminase family. In terms of assembly, homodimer. Requires Ca(2+) as cofactor. Detected in keratinocytes in epidermis (at protein level).

It is found in the cytoplasm. It carries out the reaction L-arginyl-[protein] + H2O = L-citrullyl-[protein] + NH4(+). Functionally, catalyzes the deimination of arginine residues of proteins. The chain is Protein-arginine deiminase type-2 (PADI2) from Homo sapiens (Human).